The primary structure comprises 110 residues: uncharacterized protein (110 aa).

A helical membrane pass occupies residues 29–49 (GLAFIFFFLVAFYFFPAFWDL).

The protein localises to the membrane. This is an uncharacterized protein from Saccharomyces cerevisiae (strain ATCC 204508 / S288c) (Baker's yeast).